A 389-amino-acid polypeptide reads, in one-letter code: Homoserine O-acetyltransferase (389 aa).

Positions 63-371 constitute an AB hydrolase-1 domain; it reads NAVLVLHALT…SSDYGHDGFL (309 aa). Ser168 serves as the catalytic Nucleophile. Position 240 (Arg240) interacts with substrate. Residues Asp334 and His367 contribute to the active site. Asp368 lines the substrate pocket.

It belongs to the AB hydrolase superfamily. MetX family. As to quaternary structure, homodimer.

It localises to the cytoplasm. It catalyses the reaction L-homoserine + acetyl-CoA = O-acetyl-L-homoserine + CoA. It participates in amino-acid biosynthesis; L-methionine biosynthesis via de novo pathway; O-acetyl-L-homoserine from L-homoserine: step 1/1. Its function is as follows. Transfers an acetyl group from acetyl-CoA to L-homoserine, forming acetyl-L-homoserine. The protein is Homoserine O-acetyltransferase of Clavibacter michiganensis subsp. michiganensis (strain NCPPB 382).